The chain runs to 578 residues: Malonate--CoA ligase ACSF3, mitochondrial (578 aa).

Residues 1–19 constitute a mitochondrion transit peptide; sequence MRVGAFLGRSLFSCSHVRG. Residue 205-213 coordinates ATP; sequence TSGTTGRPK. Positions 394–413 are disordered; it reads QNPRKEGTSYTTHAQGDSTG. The ATP site is built by D459, R473, and K565.

It belongs to the ATP-dependent AMP-binding enzyme family.

It localises to the mitochondrion. The enzyme catalyses tetracosanoate + ATP + CoA = tetracosanoyl-CoA + AMP + diphosphate. It catalyses the reaction malonate + ATP + CoA = malonyl-CoA + AMP + diphosphate. Its function is as follows. Catalyzes the initial reaction in intramitochondrial fatty acid synthesis, by activating malonate and methylmalonate, but not acetate, into their respective CoA thioester. May have some preference toward very-long-chain substrates. This chain is Malonate--CoA ligase ACSF3, mitochondrial, found in Xenopus laevis (African clawed frog).